The sequence spans 155 residues: Egg cell-secreted protein 1.5 (155 aa).

Positions 1–32 are cleaved as a signal peptide; that stretch reads MATKSTSKPLLLSFLMMSYLISTFHVITVAEG.

It belongs to the plant egg cell-secreted peptide family. In terms of tissue distribution, restricted to female reproductive tissues, specifically accumulating in storage vesicles of the unfertilized egg cell.

It is found in the cytoplasmic vesicle. The protein localises to the secreted. Functionally, involved in the regulation of gamete interactions during the double fertilization and to prevent multiple-pollen tube attraction; mediates the redistribution of the gamete fusogen HAP2/GCS1 to the cell surface after secretion upon sperm arrival. The sequence is that of Egg cell-secreted protein 1.5 (EC1.5) from Arabidopsis thaliana (Mouse-ear cress).